Consider the following 1266-residue polypeptide: Kinesin-like protein KIN-12G (1266 aa).

The segment at 1–22 (MPSDCGDDDHGGGSAPAGFELQ) is disordered. The 338-residue stretch at 32–369 (NVQVVIRVRP…LKFAQRAKYI (338 aa)) folds into the Kinesin motor domain. Residue 113–120 (GQTGSGKT) coordinates ATP. Coiled coils occupy residues 613 to 668 (MEFI…SEAV), 817 to 854 (RSEL…FKRK), 1029 to 1060 (ARES…AERV), and 1084 to 1120 (SELL…MNRH).

Belongs to the TRAFAC class myosin-kinesin ATPase superfamily. Kinesin family. KIN-12 subfamily.

The polypeptide is Kinesin-like protein KIN-12G (Oryza sativa subsp. japonica (Rice)).